Consider the following 254-residue polypeptide: Ribosomal RNA small subunit methyltransferase G (254 aa).

Residues Gly-84, Phe-89, 136–137, and Arg-155 each bind S-adenosyl-L-methionine; that span reads VE. Residues 231–254 form a disordered region; it reads HLYPRAVGIPSKQPLGIQADDNRS.

It belongs to the methyltransferase superfamily. RNA methyltransferase RsmG family.

It is found in the cytoplasm. Functionally, specifically methylates the N7 position of a guanine in 16S rRNA. This chain is Ribosomal RNA small subunit methyltransferase G, found in Synechococcus sp. (strain WH7803).